The primary structure comprises 377 residues: Chaperone protein DnaJ (377 aa).

The J domain maps to 8-73 (CYYETLEVER…DKRAAYDRFG (66 aa)). The CR-type zinc finger occupies 135 to 213 (GKTAQIEIPV…CSGQGRVTRE (79 aa)). Residues Cys148, Cys151, Cys165, Cys168, Cys187, Cys190, Cys201, and Cys204 each contribute to the Zn(2+) site. 4 CXXCXGXG motif repeats span residues 148-155 (CEACSGIG), 165-172 (CSTCGGAG), 187-194 (CPGCQGRG), and 201-208 (CPSCSGQG).

Belongs to the DnaJ family. Homodimer. It depends on Zn(2+) as a cofactor.

It localises to the cytoplasm. Its function is as follows. Participates actively in the response to hyperosmotic and heat shock by preventing the aggregation of stress-denatured proteins and by disaggregating proteins, also in an autonomous, DnaK-independent fashion. Unfolded proteins bind initially to DnaJ; upon interaction with the DnaJ-bound protein, DnaK hydrolyzes its bound ATP, resulting in the formation of a stable complex. GrpE releases ADP from DnaK; ATP binding to DnaK triggers the release of the substrate protein, thus completing the reaction cycle. Several rounds of ATP-dependent interactions between DnaJ, DnaK and GrpE are required for fully efficient folding. Also involved, together with DnaK and GrpE, in the DNA replication of plasmids through activation of initiation proteins. The protein is Chaperone protein DnaJ of Bradyrhizobium diazoefficiens (strain JCM 10833 / BCRC 13528 / IAM 13628 / NBRC 14792 / USDA 110).